Reading from the N-terminus, the 436-residue chain is Ribosomal protein uS12 methylthiotransferase RimO (436 aa).

One can recognise an MTTase N-terminal domain in the interval 2-117 (RNVGIISLGC…IVDVIEEVKK (116 aa)). C11, C47, C80, C154, C158, and C161 together coordinate [4Fe-4S] cluster. In terms of domain architecture, Radical SAM core spans 140 to 369 (TTPPYYAYLK…MEIQKQISYE (230 aa)). The TRAM domain occupies 372–436 (MSKIGTKLEV…AFEYDLVGEY (65 aa)).

Belongs to the methylthiotransferase family. RimO subfamily. The cofactor is [4Fe-4S] cluster.

Its subcellular location is the cytoplasm. The catalysed reaction is L-aspartate(89)-[ribosomal protein uS12]-hydrogen + (sulfur carrier)-SH + AH2 + 2 S-adenosyl-L-methionine = 3-methylsulfanyl-L-aspartate(89)-[ribosomal protein uS12]-hydrogen + (sulfur carrier)-H + 5'-deoxyadenosine + L-methionine + A + S-adenosyl-L-homocysteine + 2 H(+). Catalyzes the methylthiolation of an aspartic acid residue of ribosomal protein uS12. This chain is Ribosomal protein uS12 methylthiotransferase RimO, found in Caldanaerobacter subterraneus subsp. tengcongensis (strain DSM 15242 / JCM 11007 / NBRC 100824 / MB4) (Thermoanaerobacter tengcongensis).